The chain runs to 643 residues: Versicolorin B synthase (643 aa).

A propeptide spanning residues Met1–Met41 is cleaved from the precursor. FAD contacts are provided by residues Thr84 to Ala85 and Glu105 to Ala106. N-linked (GlcNAc...) asparagine glycosylation is present at Asn116. Gly171–Leu174 is an FAD binding site. Asn221 and Asn507 each carry an N-linked (GlcNAc...) asparagine glycan. FAD contacts are provided by residues Ala613 and Pro624–Met625.

The protein belongs to the GMC oxidoreductase family. Homodimer. Requires FAD as cofactor. In terms of processing, N-glycosylated.

The protein localises to the cytoplasm. It localises to the cytosol. The enzyme catalyses (2S-3S)-versiconal hemiacetal = versicolorin B + H2O. It catalyses the reaction (S)-5'-oxoaverantin + H(+) = (1'S,5'S)-averufin + H2O. The protein operates within mycotoxin biosynthesis; aflatoxin biosynthesis. Dual cyclase; part of the gene cluster that mediates the biosynthesis of aflatoxins, a group of polyketide-derived furanocoumarins, and part of the most toxic and carcinogenic compounds among the known mycotoxins. The four major aflatoxins produced by A.parasiticus are aflatoxin B1 (AFB1), aflatoxin B2 (AFB2), aflatoxin G1 (AFG1) and aflatoxin G2 (AFG2). Aflk plays a dual role within the aflatoxin pathway, as a 5'-oxoaverantin cyclase that mediates conversion of 5'-oxoaverantin (OAVN) to averufin (AVF), as well as a versicolorin B synthase that converts versiconal (VAL) to versicolorin B (VERB) by closing the bisfuran ring of aflatoxin which is required for DNA-binding, thus giving to aflatoxin its activity as a mutagen. The biosynthesis of aflatoxins begins with the norsolorinic acid synthase aflC that combines a hexanoyl starter unit produced by the fatty acid synthase aflA/aflB and 7 malonyl-CoA extender units to synthesize the precursor NOR. The second step is the conversion of NOR to averantin and requires the norsolorinic acid ketoreductase aflD, which catalyzes the dehydration of norsolorinic acid to form (1'S)-averantin. The norsolorinic acid reductases aflE and aflF may also play a role in the conversion of NOR to AVN. The cytochrome P450 monooxygenase aflG then catalyzes the hydroxylation of AVN to 5'hydroxyaverantin (HAVN). The next step is performed by the 5'-hydroxyaverantin dehydrogenase aflH that transforms HAVN to 5'-oxoaverantin (OAVN) which is further converted to averufin (AVF) by aflK that plays a dual role in the pathway, as a 5'-oxoaverantin cyclase that mediates conversion of 5'-oxoaverantin, as well as a versicolorin B synthase in a later step in the pathway. The averufin oxidase aflI catalyzes the conversion of AVF to versiconal hemiacetal acetate (VHA). VHA is then the substrate for the versiconal hemiacetal acetate esterase aflJ to yield versiconal (VAL). Versicolorin B synthase aflK then converts VAL to versicolorin B (VERB) by closing the bisfuran ring of aflatoxin which is required for DNA-binding, thus giving to aflatoxin its activity as a mutagen. Then, the activity of the versicolorin B desaturase aflL leads to versicolorin A (VERA). A branch point starts from VERB since it can also be converted to dihydrodemethylsterigmatocystin (DMDHST), probably also by aflL, VERA being a precursor for aflatoxins B1 and G1, and DMDHST for aflatoxins B2 and G2. Next, the versicolorin reductase aflM and the cytochrome P450 monooxygenase aflN are involved in conversion of VERA to demethylsterigmatocystin (DMST). AflX and aflY seem also involved in this step, through probable aflX-mediated epoxide ring-opening step following versicolorin A oxidation and aflY-mediated Baeyer-Villiger oxidation required for the formation of the xanthone ring. The methyltransferase aflO then leads to the modification of DMST to sterigmatocystin (ST), and of DMDHST to dihydrosterigmatocystin (DHST). Both ST and DHST are then substrates of the O-methyltransferase aflP to yield O-methylsterigmatocystin (OMST) and dihydro-O-methylsterigmatocystin (DHOMST), respectively. Finally OMST is converted to aflatoxins B1 and G1, and DHOMST to aflatoxins B2 and G2, via the action of several enzymes including O-methylsterigmatocystin oxidoreductase aflQ, the cytochrome P450 monooxygenase aflU, but also the NADH-dependent flavin oxidoreductase nadA which is specifically required for the synthesis of AFG1. This Aspergillus parasiticus (strain ATCC 56775 / NRRL 5862 / SRRC 143 / SU-1) protein is Versicolorin B synthase.